The following is a 485-amino-acid chain: Glutamyl-tRNA(Gln) amidotransferase subunit A (485 aa).

Active-site charge relay system residues include K75 and S150. S174 (acyl-ester intermediate) is an active-site residue.

Belongs to the amidase family. GatA subfamily. In terms of assembly, heterotrimer of A, B and C subunits.

It catalyses the reaction L-glutamyl-tRNA(Gln) + L-glutamine + ATP + H2O = L-glutaminyl-tRNA(Gln) + L-glutamate + ADP + phosphate + H(+). Allows the formation of correctly charged Gln-tRNA(Gln) through the transamidation of misacylated Glu-tRNA(Gln) in organisms which lack glutaminyl-tRNA synthetase. The reaction takes place in the presence of glutamine and ATP through an activated gamma-phospho-Glu-tRNA(Gln). This is Glutamyl-tRNA(Gln) amidotransferase subunit A from Picosynechococcus sp. (strain ATCC 27264 / PCC 7002 / PR-6) (Agmenellum quadruplicatum).